The chain runs to 871 residues: Protein translocase subunit SecA (871 aa).

Residues glutamine 80, 98–102, and aspartate 537 contribute to the ATP site; that span reads GEGKT. The interval 852–871 is disordered; that stretch reads MEKGKKKGGSHGLGKIRVKR. The segment covering 855 to 871 has biased composition (basic residues); sequence GKKKGGSHGLGKIRVKR.

This sequence belongs to the SecA family. As to quaternary structure, monomer and homodimer. Part of the essential Sec protein translocation apparatus which comprises SecA, SecYEG and auxiliary proteins SecDF. Other proteins may also be involved.

The protein resides in the cell inner membrane. It is found in the cytoplasm. It catalyses the reaction ATP + H2O + cellular proteinSide 1 = ADP + phosphate + cellular proteinSide 2.. In terms of biological role, part of the Sec protein translocase complex. Interacts with the SecYEG preprotein conducting channel. Has a central role in coupling the hydrolysis of ATP to the transfer of proteins into and across the cell membrane, serving as an ATP-driven molecular motor driving the stepwise translocation of polypeptide chains across the membrane. The polypeptide is Protein translocase subunit SecA (Thermotoga neapolitana (strain ATCC 49049 / DSM 4359 / NBRC 107923 / NS-E)).